A 226-amino-acid polypeptide reads, in one-letter code: Orotate phosphoribosyltransferase (226 aa).

Lys-29 serves as a coordination point for 5-phospho-alpha-D-ribose 1-diphosphate. 37-38 provides a ligand contact to orotate; it reads FF. Residues 75–76, Arg-101, Lys-102, Lys-105, His-107, and 126–134 each bind 5-phospho-alpha-D-ribose 1-diphosphate; these read YK and DDVISAGTS. Residues Ser-130 and Arg-158 each coordinate orotate.

It belongs to the purine/pyrimidine phosphoribosyltransferase family. PyrE subfamily. Homodimer. The cofactor is Mg(2+).

The catalysed reaction is orotidine 5'-phosphate + diphosphate = orotate + 5-phospho-alpha-D-ribose 1-diphosphate. The protein operates within pyrimidine metabolism; UMP biosynthesis via de novo pathway; UMP from orotate: step 1/2. Catalyzes the transfer of a ribosyl phosphate group from 5-phosphoribose 1-diphosphate to orotate, leading to the formation of orotidine monophosphate (OMP). The sequence is that of Orotate phosphoribosyltransferase from Ralstonia nicotianae (strain ATCC BAA-1114 / GMI1000) (Ralstonia solanacearum).